A 104-amino-acid chain; its full sequence is Large ribosomal subunit protein uL24 (104 aa).

Belongs to the universal ribosomal protein uL24 family. In terms of assembly, part of the 50S ribosomal subunit.

Functionally, one of two assembly initiator proteins, it binds directly to the 5'-end of the 23S rRNA, where it nucleates assembly of the 50S subunit. Its function is as follows. One of the proteins that surrounds the polypeptide exit tunnel on the outside of the subunit. This chain is Large ribosomal subunit protein uL24, found in Rhodopseudomonas palustris (strain BisA53).